The sequence spans 175 residues: MVVYDLLVSLSKESIDVLRFIETNLAAFNQQYIFFNIQRKNSIMTPLLITPQQEKISQIVEFLMDEYNKSNRRPGPPREQPMQAYPLLSYQQSSEEQPMMPYQQPPGDDDQPYEQIYHKKHASQQVNTELSDYYQHILALGDEDKGMDSMLKLPERAKRESDDEDDMFPIKKLTT.

Disordered stretches follow at residues 68-111 and 154-175; these read NKSN…DDDQ and PERA…KLTT. Positions 95–106 are enriched in low complexity; the sequence is EEQPMMPYQQPP.

It belongs to the asfivirus H171R family.

It is found in the virion. This is an uncharacterized protein from African swine fever virus (isolate Pig/Kenya/KEN-50/1950) (ASFV).